Reading from the N-terminus, the 132-residue chain is Phosphoribosyl-AMP cyclohydrolase (132 aa).

A Mg(2+)-binding site is contributed by D79. C80 provides a ligand contact to Zn(2+). 2 residues coordinate Mg(2+): D81 and D83. Positions 100 and 107 each coordinate Zn(2+).

This sequence belongs to the PRA-CH family. As to quaternary structure, homodimer. Mg(2+) serves as cofactor. The cofactor is Zn(2+).

The protein localises to the cytoplasm. It catalyses the reaction 1-(5-phospho-beta-D-ribosyl)-5'-AMP + H2O = 1-(5-phospho-beta-D-ribosyl)-5-[(5-phospho-beta-D-ribosylamino)methylideneamino]imidazole-4-carboxamide. It participates in amino-acid biosynthesis; L-histidine biosynthesis; L-histidine from 5-phospho-alpha-D-ribose 1-diphosphate: step 3/9. Functionally, catalyzes the hydrolysis of the adenine ring of phosphoribosyl-AMP. The chain is Phosphoribosyl-AMP cyclohydrolase from Acidovorax sp. (strain JS42).